Consider the following 369-residue polypeptide: Spore membrane assembly protein 2 (369 aa).

Topologically, residues 1–6 are cytoplasmic; that stretch reads MLFPKR. Residues 7–27 form a helical membrane-spanning segment; that stretch reads LIVWGVLLILSLSQFVLYLPA. Topologically, residues 28–220 are lumenal; that stretch reads TTCTNSKGLR…NLAFILMMFN (193 aa). The helical transmembrane segment at 221 to 241 threads the bilayer; the sequence is GMVFYFAVLEIIVGFLSICVV. Residues 242 to 265 are Cytoplasmic-facing; that stretch reads SAFGGALSVGKRHRLFPILLKSSS. A helical membrane pass occupies residues 266 to 286; it reads SILVVIATLTILCNIVYLIAL. Topologically, residues 287-319 are lumenal; sequence KTLEPEEVTDVGSDNAAVHTTGWELLKVNVGSG. Residues 320–340 form a helical membrane-spanning segment; that stretch reads FIMGLARYAIQWVLLVLAFLA. At 341 to 369 the chain is on the cytoplasmic side; it reads ANHYKAKPKKSDKYTEDTSNSPSPDLMEK. The disordered stretch occupies residues 348-369; sequence PKKSDKYTEDTSNSPSPDLMEK.

Belongs to the SMA2 family.

The protein resides in the prospore membrane. It localises to the endoplasmic reticulum. In terms of biological role, involved in spore and ascus formation. Required for the efficient assembly of the precursors of the prospore membrane to a continuous prospore membrane. This is Spore membrane assembly protein 2 (SMA2) from Saccharomyces cerevisiae (strain YJM789) (Baker's yeast).